We begin with the raw amino-acid sequence, 345 residues long: UDP-3-O-acylglucosamine N-acyltransferase (345 aa).

His248 (proton acceptor) is an active-site residue.

Belongs to the transferase hexapeptide repeat family. LpxD subfamily. In terms of assembly, homotrimer.

It carries out the reaction a UDP-3-O-[(3R)-3-hydroxyacyl]-alpha-D-glucosamine + a (3R)-hydroxyacyl-[ACP] = a UDP-2-N,3-O-bis[(3R)-3-hydroxyacyl]-alpha-D-glucosamine + holo-[ACP] + H(+). It functions in the pathway bacterial outer membrane biogenesis; LPS lipid A biosynthesis. Catalyzes the N-acylation of UDP-3-O-acylglucosamine using 3-hydroxyacyl-ACP as the acyl donor. Is involved in the biosynthesis of lipid A, a phosphorylated glycolipid that anchors the lipopolysaccharide to the outer membrane of the cell. This Prochlorococcus marinus (strain SARG / CCMP1375 / SS120) protein is UDP-3-O-acylglucosamine N-acyltransferase.